Consider the following 394-residue polypeptide: Multidrug resistance protein D (394 aa).

The Cytoplasmic segment spans residues 1 to 8 (MKRQRNVN). A helical membrane pass occupies residues 9-29 (LLLMLVLLVAVGQMAQTIYIP). Over 30–46 (AIADMARDLNVREGAVQ) the chain is Periplasmic. Residues 47–67 (SVMGAYLLTYGVSQLFYGPIS) form a helical membrane-spanning segment. Topologically, residues 68–73 (DRVGRR) are cytoplasmic. Residues 74-94 (PVILVGMSIFMLATLVAVTTS) traverse the membrane as a helical segment. Residue serine 95 is a topological domain, periplasmic. A helical membrane pass occupies residues 96-116 (LTVLIAASAMQGMGTGVGGVM). Residues 117–134 (ARTLPRDLYERTQLRHAN) lie on the Cytoplasmic side of the membrane. The helical transmembrane segment at 135–155 (SLLNMGILVSPLLAPLIGGLL) threads the bilayer. Topologically, residues 156 to 162 (DTMWNWR) are periplasmic. A helical transmembrane segment spans residues 163-183 (ACYLFLLVLCAGVTFSMARWM). At 184–212 (PETRPVDAPRTRLLTSYKTLFGNSGFNCY) the chain is on the cytoplasmic side. Residues 213–233 (LLMLIGGLAGIAAFEACSGVL) traverse the membrane as a helical segment. At 234-242 (MGAVLGLSS) the chain is on the periplasmic side. Residues 243 to 263 (MTVSILFILPIPAAFFGAWFA) traverse the membrane as a helical segment. Residues 264–276 (GRPNKRFSTLMWQ) lie on the Cytoplasmic side of the membrane. Residues 277 to 297 (SVICCLLAGLLMWIPDWFGVM) form a helical membrane-spanning segment. Position 298 (asparagine 298) is a topological domain, periplasmic. A helical transmembrane segment spans residues 299–319 (VWTLLVPAALFFFGAGMLFPL). Residues 320-329 (ATSGAMEPFP) are Cytoplasmic-facing. Residues 330–350 (FLAGTAGALVGGLQNIGSGVL) traverse the membrane as a helical segment. Residues 351-364 (ASLSAMLPQTGQGS) lie on the Periplasmic side of the membrane. A helical transmembrane segment spans residues 365–385 (LGLLMTLMGLLIVLCWLPLAT). Over 386-394 (RMSHQGQPV) the chain is Cytoplasmic.

Belongs to the major facilitator superfamily.

The protein resides in the cell inner membrane. In terms of biological role, multidrug resistance pump that participates in a low energy shock adaptive response. The chain is Multidrug resistance protein D (emrD) from Escherichia coli (strain K12).